We begin with the raw amino-acid sequence, 362 residues long: Peptide chain release factor 1 (362 aa).

At Gln236 the chain carries N5-methylglutamine.

Belongs to the prokaryotic/mitochondrial release factor family. Methylated by PrmC. Methylation increases the termination efficiency of RF1.

The protein resides in the cytoplasm. In terms of biological role, peptide chain release factor 1 directs the termination of translation in response to the peptide chain termination codons UAG and UAA. The polypeptide is Peptide chain release factor 1 (Lactobacillus helveticus (strain DPC 4571)).